Consider the following 59-residue polypeptide: Large ribosomal subunit protein uL30 (59 aa).

It belongs to the universal ribosomal protein uL30 family. As to quaternary structure, part of the 50S ribosomal subunit.

The chain is Large ribosomal subunit protein uL30 from Sulfurihydrogenibium sp. (strain YO3AOP1).